The following is a 105-amino-acid chain: Large ribosomal subunit protein uL24 (105 aa).

It belongs to the universal ribosomal protein uL24 family. As to quaternary structure, part of the 50S ribosomal subunit.

In terms of biological role, one of two assembly initiator proteins, it binds directly to the 5'-end of the 23S rRNA, where it nucleates assembly of the 50S subunit. Its function is as follows. One of the proteins that surrounds the polypeptide exit tunnel on the outside of the subunit. The protein is Large ribosomal subunit protein uL24 of Methylococcus capsulatus (strain ATCC 33009 / NCIMB 11132 / Bath).